Here is a 203-residue protein sequence, read N- to C-terminus: VPS4-associated protein 1 (203 aa).

Basic and acidic residues predominate over residues 99–109 (EKETNNSKDPD). Disordered stretches follow at residues 99 to 125 (EKET…AKND) and 171 to 193 (QVNR…EELL). Residues 110-120 (PTTTDSTDTSP) show a composition bias toward low complexity. Residues 121 to 157 (QAKNDAEILSETKKQYSKILDKVTELQRKNRKYELAK) are a coiled coil. Residues 171 to 182 (QVNRERYLKEQE) are compositionally biased toward basic and acidic residues.

In terms of assembly, interacts with VPS4.

The protein localises to the cytoplasm. Its subcellular location is the endosome. Its function is as follows. VPS4-associated protein involved in trafficking to the vacuole. This is VPS4-associated protein 1 (VFA1) from Saccharomyces cerevisiae (strain ATCC 204508 / S288c) (Baker's yeast).